Here is a 123-residue protein sequence, read N- to C-terminus: Ribosome-binding factor A (123 aa).

It belongs to the RbfA family. Monomer. Binds 30S ribosomal subunits, but not 50S ribosomal subunits or 70S ribosomes.

It localises to the cytoplasm. One of several proteins that assist in the late maturation steps of the functional core of the 30S ribosomal subunit. Associates with free 30S ribosomal subunits (but not with 30S subunits that are part of 70S ribosomes or polysomes). Required for efficient processing of 16S rRNA. May interact with the 5'-terminal helix region of 16S rRNA. The polypeptide is Ribosome-binding factor A (Syntrophus aciditrophicus (strain SB)).